The sequence spans 199 residues: Nuclear protein UL4 (199 aa).

Belongs to the alphaherpesvirinae HHV-1 UL4 family.

It localises to the host nucleus. In Homo sapiens (Human), this protein is Nuclear protein UL4.